The primary structure comprises 127 residues: Fluoride-specific ion channel FluC (127 aa).

A run of 4 helical transmembrane segments spans residues 4–24 (LLLVAAGGAVGSVARYLVGVG), 36–56 (GTFTVNVVGGFLMGCLASWLA), 72–92 (VGVLGGFTTFSSFSLETALMI), and 101–121 (FTYSAASVLLAIAALFAGLLV). Glycine 76 and threonine 79 together coordinate Na(+).

The protein belongs to the fluoride channel Fluc/FEX (TC 1.A.43) family.

The protein resides in the cell inner membrane. It carries out the reaction fluoride(in) = fluoride(out). Na(+) is not transported, but it plays an essential structural role and its presence is essential for fluoride channel function. Functionally, fluoride-specific ion channel. Important for reducing fluoride concentration in the cell, thus reducing its toxicity. This chain is Fluoride-specific ion channel FluC, found in Caulobacter vibrioides (strain ATCC 19089 / CIP 103742 / CB 15) (Caulobacter crescentus).